The primary structure comprises 421 residues: Synaptotagmin-12 (421 aa).

Topologically, residues 1–18 (MAVDVTEYHLSVIKSPPG) are vesicular. The chain crosses the membrane as a helical span at residues 19 to 39 (WEVGVYAAGALALLGIAAVSL). The Cytoplasmic portion of the chain corresponds to 40 to 421 (WKLWTSGSFP…VSMWHPVRRN (382 aa)). Residue serine 97 is modified to Phosphoserine; by PKA. Serine 99 and serine 214 each carry phosphoserine. 2 C2 domains span residues 152 to 272 (TLGQ…SGWL) and 283 to 416 (AVGE…SMWH).

The protein belongs to the synaptotagmin family. In terms of assembly, homodimer. Can also form heterodimers. Interacts with SYT1. In terms of processing, phosphorylation of Ser-97 is required for mossy-fiber long-term potentiation. Expressed in the brain, specifically by neurons in the hippocampus, and in the adrenal medulla (at protein level).

The protein localises to the cytoplasmic vesicle. Its subcellular location is the secretory vesicle. It is found in the synaptic vesicle membrane. Its function is as follows. Synaptic vesicle phosphoprotein that enhances spontaneous neurotransmitter release but does not effect induced neurotransmitter release. Unlike other synaptotagmins, it does not bind Ca(2+) or phospholipids. Essential for mossy-fiber long-term potentiation in the hippocampus. The chain is Synaptotagmin-12 from Mus musculus (Mouse).